The primary structure comprises 289 residues: MMRRTLENRNAQTKQLQTAVSNVEKHFGELCQIFAAYVRKTARLRDKADLLVNEINAYAATETPHLKLGLMNFADEFAKLQDYRQAEVERLEAKVVEPLKTYGTIVKMKRDDLKATLTARNREAKQLTQLERTRQRNPSDRHVISQAETELQRAAMDASRTSRHLEETINNFERQKMKDIKTIFSEFITIEMLFHGKALEVYTAAYQNIQNIDEDEDLEVFRNSLYAPDYSSRLDIVRANSKSPLQRSLSAKCVSGTGQVSTCRLRKDQQAEDDEDDELDVTEEENFLK.

The transit peptide at 1 to 47 (MMRRTLENRNAQTKQLQTAVSNVEKHFGELCQIFAAYVRKTARLRDK) directs the protein to the mitochondrion. The segment at 10-220 (NAQTKQLQTA…NIDEDEDLEV (211 aa)) is BAR-like. Residues 107–178 (KMKRDDLKAT…INNFERQKMK (72 aa)) are a coiled coil. Positions 265–289 (LRKDQQAEDDEDDELDVTEEENFLK) are disordered. Positions 271-289 (AEDDEDDELDVTEEENFLK) are enriched in acidic residues.

It belongs to the CIBAR family. As to quaternary structure, homodimer (via BAR-like domain). Heterodimer with FAM92B (via BAR-like domains). Interacts (via BAR-like domain) with CBY1; this interaction is required for targeting FAM92A to centriole and cilium basal body. Interacts (via BAR-like domain) with CBY3; both proteins form a ninefold symmetric structure at the flagellar base; are recruited to the annulus in a mutually dependent manner and regulate annulus positionning.

Its subcellular location is the cytoplasm. The protein localises to the cytoskeleton. The protein resides in the microtubule organizing center. It is found in the centrosome. It localises to the centriole. Its subcellular location is the cilium basal body. The protein localises to the cell projection. The protein resides in the cilium. It is found in the nucleus. It localises to the mitochondrion inner membrane. Its subcellular location is the flagellum. Functionally, plays a critical role in regulating mitochondrial ultrastructure and function by maintaining the integrity of mitochondrial morphology, particularly the organization of cristae. Preferentially binds to negatively charged phospholipids like cardiolipin and phosphatidylinositol 4,5-bisphosphate enhancing its interaction with mitochondrial membranes. Induces membrane curvature and tubulation, which are critical for maintaining mitochondrial ultrastructure and the organization of cristae. Plays a crucial role in ciliogenesis. May play a role in limb development through its role in ciliogenesis. Plays a key role in the correct positioning of the annulus, a septin-based ring structure in the sperm flagellum, serving both as a physical barrier and a membrane diffusion barrier that separates the midpiece (MP) from the principal piece (PP). This positioning is essential for proper sperm motility and function. Interacts with CBY3 to form a complex which localizes to the curved membrane region of the flagellar pocket. By doing so, may provide stability and rigidity to the periannular membrane to prevent membrane deformation. This function is crucial for halting annulus migration at the proximal end of the fibrous sheath-containing PP. This Homo sapiens (Human) protein is CBY1-interacting BAR domain-containing protein 1.